Consider the following 581-residue polypeptide: Guanine nucleotide-binding protein-like 3 homolog (581 aa).

The span at methionine 1–lysine 49 shows a compositional bias: basic residues. The segment at methionine 1–leucine 50 is disordered. A coiled-coil region spans residues leucine 64–serine 108. Serine 99 is subject to Phosphoserine. The CP-type G domain occupies phenylalanine 141 to threonine 325. Residues asparagine 189–aspartate 192, glycine 274–serine 281, and aspartate 318–glycine 321 each bind GTP. Basic and acidic residues predominate over residues lysine 500–aspartate 517. The segment at lysine 500–serine 519 is disordered.

The protein belongs to the TRAFAC class YlqF/YawG GTPase family.

The protein resides in the nucleus. Its subcellular location is the nucleolus. In terms of biological role, may play a role in regulating cellular proliferation. This is Guanine nucleotide-binding protein-like 3 homolog (Ns1) from Drosophila melanogaster (Fruit fly).